Reading from the N-terminus, the 106-residue chain is Small ribosomal subunit protein uS10 (106 aa).

Belongs to the universal ribosomal protein uS10 family. Part of the 30S ribosomal subunit.

Involved in the binding of tRNA to the ribosomes. This is Small ribosomal subunit protein uS10 from Mesomycoplasma hyopneumoniae (strain 232) (Mycoplasma hyopneumoniae).